We begin with the raw amino-acid sequence, 176 residues long: Large ribosomal subunit protein uL10 (176 aa).

The protein belongs to the universal ribosomal protein uL10 family. As to quaternary structure, part of the ribosomal stalk of the 50S ribosomal subunit. The N-terminus interacts with L11 and the large rRNA to form the base of the stalk. The C-terminus forms an elongated spine to which L12 dimers bind in a sequential fashion forming a multimeric L10(L12)X complex.

Its function is as follows. Forms part of the ribosomal stalk, playing a central role in the interaction of the ribosome with GTP-bound translation factors. The sequence is that of Large ribosomal subunit protein uL10 from Thioalkalivibrio sulfidiphilus (strain HL-EbGR7).